Reading from the N-terminus, the 379-residue chain is Phospholipase A1 (379 aa).

Residues 1–20 form the signal peptide; sequence MKFITAILVIFCVYLLSTAG. A propeptide spanning residues 21-73 is cleaved from the precursor; that stretch reads DSKILPLKKLPSKIFGHLKSHVDNTVKKPLKVFGHLKSHVENSVGPLRMNKLT. Cys-76 and Cys-154 are disulfide-bonded. An N-linked (GlcNAc...) asparagine glycan is attached at Asn-126. The active-site Nucleophile is the Ser-204. Catalysis depends on Asp-232, which acts as the Charge relay system. Intrachain disulfides connect Cys-243/Cys-248 and Cys-285/Cys-291. The active-site Charge relay system is the His-293.

This sequence belongs to the AB hydrolase superfamily. Lipase family. Contains five disulfide bonds. As to expression, expressed by the venom gland.

The protein resides in the secreted. It catalyses the reaction a 1,2-diacyl-sn-glycero-3-phosphocholine + H2O = a 2-acyl-sn-glycero-3-phosphocholine + a fatty acid + H(+). Its function is as follows. Catalyzes the hydrolysis of phosphatidylcholine with phospholipase A1 activity. May act as an allergen and induce hemolytic activity. The chain is Phospholipase A1 from Dinoponera quadriceps (South American ant).